The following is a 250-amino-acid chain: Small ribosomal subunit protein uS2 (250 aa).

This sequence belongs to the universal ribosomal protein uS2 family.

The protein is Small ribosomal subunit protein uS2 of Chloroherpeton thalassium (strain ATCC 35110 / GB-78).